The primary structure comprises 152 residues: Large ribosomal subunit protein bL9 (152 aa).

It belongs to the bacterial ribosomal protein bL9 family.

In terms of biological role, binds to the 23S rRNA. This is Large ribosomal subunit protein bL9 from Acaryochloris marina (strain MBIC 11017).